We begin with the raw amino-acid sequence, 238 residues long: Leucine-rich repeat-containing protein 57 (238 aa).

8 LRR repeats span residues 10–36 (LETS…LQKL), 37–62 (TANL…SFQH), 64–82 (KSFT…DIGK), 83–106 (LKKL…IGQL), 108–128 (SLRT…GLGT), 129–152 (LRQL…VAEL), 154–173 (AIEI…EVSR), and 174–199 (TPRL…ILTD).

This chain is Leucine-rich repeat-containing protein 57 (lrrc57), found in Danio rerio (Zebrafish).